The primary structure comprises 224 residues: Non-structural protein V (224 aa).

Residues 55-65 are compositionally biased toward polar residues; sequence KNIQYPTTSHQ. Disordered stretches follow at residues 55–90 and 145–172; these read KNIQYPTTSHQGSKSKGRGSGARPIIVSSSEGGTGG and TSTPVTEFKRGAGSGCSRPDNPRGGHRR. The Zn(2+) site is built by histidine 170, cysteine 189, cysteine 193, cysteine 205, cysteine 207, cysteine 210, cysteine 214, and cysteine 217.

It belongs to the paramyxoviruses V protein family. As to quaternary structure, interacts with host IFIH1/MDA5 and DHX58/LGP2. Forms with host DDB1, CUL4A, STAT1, STAT2 and STAT3 the mumps virus V-dependent complex (VDC).

It localises to the virion. It is found in the host cytoplasm. Its function is as follows. Plays an essential role in the inhibition of host immune response. Prevents the establishment of cellular antiviral state by blocking interferon-alpha/beta (IFN-alpha/beta) production and signaling pathway. Interacts with host IFIH1/MDA5 and DHX58/LGP2 to inhibit the transduction pathway involved in the activation of IFN-beta promoter, thus protecting the virus against cell antiviral state. Blocks the type I and II interferon signaling pathways by interacting with host STAT1, STAT2 and STAT3, and mediating their ubiquitination and subsequent proteasomal degradation. This Mumps virus genotype B (strain Miyahara vaccine) (MuV) protein is Non-structural protein V.